The following is a 214-amino-acid chain: Adenylate kinase (214 aa).

10-15 contributes to the ATP binding site; the sequence is GAGKGT. The interval 30–59 is NMP; sequence STGDIFRANIKGNTPLGQKAKEYMDKGELV. Residues Thr-31, Arg-36, 57 to 59, 85 to 88, and Gln-92 contribute to the AMP site; these read ELV and GFPR. An LID region spans residues 126–163; sequence GRRVCTNCGATYNVVFNPTKVEGICDVCNSPVIQRADD. Arg-127 is an ATP binding site. Zn(2+) contacts are provided by Cys-130 and Cys-133. 136–137 is a binding site for ATP; sequence TY. Zn(2+) contacts are provided by Cys-150 and Cys-153. AMP is bound by residues Arg-160 and Arg-171. Position 199 (Gly-199) interacts with ATP.

It belongs to the adenylate kinase family. As to quaternary structure, monomer.

The protein resides in the cytoplasm. It catalyses the reaction AMP + ATP = 2 ADP. Its pathway is purine metabolism; AMP biosynthesis via salvage pathway; AMP from ADP: step 1/1. Functionally, catalyzes the reversible transfer of the terminal phosphate group between ATP and AMP. Plays an important role in cellular energy homeostasis and in adenine nucleotide metabolism. The polypeptide is Adenylate kinase (Ruminiclostridium cellulolyticum (strain ATCC 35319 / DSM 5812 / JCM 6584 / H10) (Clostridium cellulolyticum)).